A 336-amino-acid polypeptide reads, in one-letter code: Tetraacyldisaccharide 4'-kinase (336 aa).

Position 60–67 (60–67 (TVGGTGKT)) interacts with ATP.

Belongs to the LpxK family.

The catalysed reaction is a lipid A disaccharide + ATP = a lipid IVA + ADP + H(+). It participates in glycolipid biosynthesis; lipid IV(A) biosynthesis; lipid IV(A) from (3R)-3-hydroxytetradecanoyl-[acyl-carrier-protein] and UDP-N-acetyl-alpha-D-glucosamine: step 6/6. In terms of biological role, transfers the gamma-phosphate of ATP to the 4'-position of a tetraacyldisaccharide 1-phosphate intermediate (termed DS-1-P) to form tetraacyldisaccharide 1,4'-bis-phosphate (lipid IVA). This is Tetraacyldisaccharide 4'-kinase from Pseudomonas entomophila (strain L48).